The primary structure comprises 689 residues: MTTQDFLLEIGCEELPPRRLNQLSQALSQTIKSELEKADLSFENIHRYATPRRLAVLVNNLALQQPQRKIERQGPSVKAAFDKDQTPTLACFGFAQSCGVSTAQLKVKKTKKGEFIYCEIEQPGQNTLDLLPNIIQSALKQLPTPKAMRWGDHKEFFVRPVHWIILMLGKDLVPATLLGKMASCETRGHRFHHPKNILVTKPDDYQKLLLTHGMVIADFEKRREKIRDLIQKAASEKGEAIIDEGLLEEVTGMVEWPVILVGNFKAEFLELPPEVLITTMKVHQRTFPIKNKNGDLLPYFIIVSNIESKNPKRVIVGNERVINARLADASFFYDNDLRTSLENRLPKLGDVIFQRQLGTLADKARRIEKLAAFIAKQINIDEQLAARAGLLSKCDLVSEMVYEFPTLQGIMGYYYAFHDKEPPLVAEAIKEHYLPRFSGDQLPRNLLSPCVAVADRIDTIIGIIGINKSPTGDKDPFALRRAALGILRILIEKELSLDLFALLNEAKNNYAVELPNVNVVNQSFDFIIERLRAWYLEKEVPASVFMAVLASHPDDPLDFDRRIKAVQHFQTLPEADALAAANKRVSNILKKQAAELKSKTIDHSLFDSDAEHLLADQLKERAELVNNLYKKADYTKALSELASLKEPIDIFFDKVMVMVDDKEKRENRLALLSSLQQLFSQIADISLLS.

Belongs to the class-II aminoacyl-tRNA synthetase family. In terms of assembly, tetramer of two alpha and two beta subunits.

The protein resides in the cytoplasm. The enzyme catalyses tRNA(Gly) + glycine + ATP = glycyl-tRNA(Gly) + AMP + diphosphate. The protein is Glycine--tRNA ligase beta subunit of Coxiella burnetii (strain RSA 331 / Henzerling II).